Consider the following 120-residue polypeptide: ESAT-6-like protein EsxQ (120 aa).

Belongs to the WXG100 family. ESAT-6 subfamily.

It is found in the secreted. This chain is ESAT-6-like protein EsxQ, found in Mycobacterium bovis (strain ATCC BAA-935 / AF2122/97).